Consider the following 426-residue polypeptide: DNA polymerase processivity factor component OPG148 (426 aa).

The protein belongs to the orthopoxvirus OPG148 family. In terms of assembly, interacts with the DNA polymerase catalytic subunit OPG071. Interacts with UDG/OPG116. Component of the uracil-DNA glycosylase(UDG)-OPG148-polymerase complex; OPG148 and UDG form a heterodimeric processivity factor that associates with OPG071 to form the processive polymerase holoenzyme. Interacts with OPG117.

Plays an essential role in viral DNA replication by acting as the polymerase processivity factor together with protein OPG116. Serves as a bridge which links the DNA polymerase OPG071 and the uracil DNA glycosylase. This is DNA polymerase processivity factor component OPG148 (OPG148) from Vaccinia virus (strain Copenhagen) (VACV).